A 207-amino-acid polypeptide reads, in one-letter code: Ribosomal RNA small subunit methyltransferase G (207 aa).

S-adenosyl-L-methionine-binding positions include Gly73, Leu78, 124–125 (VE), and Arg139.

The protein belongs to the methyltransferase superfamily. RNA methyltransferase RsmG family.

Its subcellular location is the cytoplasm. It catalyses the reaction guanosine(527) in 16S rRNA + S-adenosyl-L-methionine = N(7)-methylguanosine(527) in 16S rRNA + S-adenosyl-L-homocysteine. In terms of biological role, specifically methylates the N7 position of guanine in position 527 of 16S rRNA. In Escherichia coli O17:K52:H18 (strain UMN026 / ExPEC), this protein is Ribosomal RNA small subunit methyltransferase G.